Consider the following 400-residue polypeptide: MTQFASPVLHSLLDTDAYKLHMQQAVFHHYHDVHVAAEFRCRGDDLLGIYADAIREQVHAMQHLRLQEEEFQWLTGLPFFKPDYLNWLRDFRYNPEQVSVTNDNGKLNIRLTGPWLEVIMWEVPLLAVISELVHHYRSPEASVQLAMNTLEQKLADFTTLTAGLDMSRFHLMDFGTRRRFSRDVQEAIVKRLQQESWFVGTSNYDLARRLSLTPMGTQAHEWFQAHQQISPDLATSQRAALAAWLEEYPDQLGIALTDCITMDAFLRDFGVEFASRYQGLRHDSGDPVEWGEKAIAHYLKLGIDPQSKVLVFSDNLDLTKAIELYRHFSSRIKLSFGIGTRLTCDIPQVKPLNIVIKLVECNGKPVAKLSDSPGKTICHDKAFVRALRKAFDLPQIKKAS.

His-220 bears the Phosphohistidine; by autocatalysis mark.

The protein belongs to the NAPRTase family. Post-translationally, transiently phosphorylated on a His residue during the reaction cycle. Phosphorylation strongly increases the affinity for substrates and increases the rate of nicotinate D-ribonucleotide production. Dephosphorylation regenerates the low-affinity form of the enzyme, leading to product release.

The enzyme catalyses nicotinate + 5-phospho-alpha-D-ribose 1-diphosphate + ATP + H2O = nicotinate beta-D-ribonucleotide + ADP + phosphate + diphosphate. Its pathway is cofactor biosynthesis; NAD(+) biosynthesis; nicotinate D-ribonucleotide from nicotinate: step 1/1. Functionally, catalyzes the synthesis of beta-nicotinate D-ribonucleotide from nicotinate and 5-phospho-D-ribose 1-phosphate at the expense of ATP. This chain is Nicotinate phosphoribosyltransferase, found in Escherichia fergusonii (strain ATCC 35469 / DSM 13698 / CCUG 18766 / IAM 14443 / JCM 21226 / LMG 7866 / NBRC 102419 / NCTC 12128 / CDC 0568-73).